Reading from the N-terminus, the 158-residue chain is Small ribosomal subunit protein uS9 (158 aa).

This sequence belongs to the universal ribosomal protein uS9 family.

The chain is Small ribosomal subunit protein uS9 from Brucella abortus (strain S19).